Consider the following 549-residue polypeptide: Undecaprenyl phosphate-alpha-4-amino-4-deoxy-L-arabinose arabinosyl transferase (549 aa).

Helical transmembrane passes span 9–29 (LLLIAFGLFYLVPLSNHGLWI), 80–100 (LFGVRIASVVATALSVLLAYL), 112–132 (SLACALLYASFGLIAGQSGYA), 136–156 (PQFTFWVNLSLVALWYALDAG), 166–186 (ILLGLACGMGFLTKGFLAWLL), 204–224 (LLGYGALAVLAALLVCLPWAL), 256–276 (PWWFYLPLLVVACLPWSGLLP), 288–308 (QAPVVFLALWLLLPLAFFSLS), 312–332 (LPTYIMPCLLPLALLMGHALV), 346–366 (NGLLNLGLALLALAALAYLQL), 376–396 (FELFLVLLVIGAWAAAGLAQW), and 402–422 (AWAAPLLASWVLIALLPAAMP).

It belongs to the glycosyltransferase 83 family.

It is found in the cell inner membrane. The catalysed reaction is 4-amino-4-deoxy-alpha-L-arabinopyranosyl di-trans,octa-cis-undecaprenyl phosphate + lipid IVA = lipid IIA + di-trans,octa-cis-undecaprenyl phosphate.. Its pathway is lipopolysaccharide metabolism; 4-amino-4-deoxy-beta-L-arabinose-lipid A biosynthesis. Functionally, catalyzes the transfer of the L-Ara4N moiety of the glycolipid undecaprenyl phosphate-alpha-L-Ara4N to lipid A. The modified arabinose is attached to lipid A and is required for resistance to polymyxin and cationic antimicrobial peptides. This is Undecaprenyl phosphate-alpha-4-amino-4-deoxy-L-arabinose arabinosyl transferase from Pseudomonas aeruginosa (strain UCBPP-PA14).